The following is a 519-amino-acid chain: Chaperone SurA (519 aa).

A signal peptide spans 1–31; the sequence is MMRSLHSLRRMSGTVLALMLAAGLPLSAAQA. Composition is skewed to low complexity over residues 31-45 and 197-207; these read AQPAKPAPKGDQKPA and PAAAQATRAPA. Disordered regions lie at residues 31-50 and 196-221; these read AQPAKPAPKGDQKPATPAPS and NPAAAQATRAPAPQQPQPQPRQPAQS. The PpiC 1 domain maps to 223-324; it reads PAMLVLAQIL…NGFHILKVVD (102 aa). The segment at 328–361 is disordered; it reads GGQPAQAARPAPAPAPQQPSSFQEGPSVAAPQGP. Residues 364-463 enclose the PpiC 2 domain; it reads VTQTHARHIL…FGWHLIQVLE (100 aa).

It localises to the periplasm. The enzyme catalyses [protein]-peptidylproline (omega=180) = [protein]-peptidylproline (omega=0). Its function is as follows. Chaperone involved in the correct folding and assembly of outer membrane proteins. Recognizes specific patterns of aromatic residues and the orientation of their side chains, which are found more frequently in integral outer membrane proteins. May act in both early periplasmic and late outer membrane-associated steps of protein maturation. This is Chaperone SurA from Bordetella pertussis (strain Tohama I / ATCC BAA-589 / NCTC 13251).